Reading from the N-terminus, the 260-residue chain is Malonyl-[acyl-carrier protein] O-methyltransferase (260 aa).

Belongs to the methyltransferase superfamily.

It catalyses the reaction malonyl-[ACP] + S-adenosyl-L-methionine = malonyl-[ACP] methyl ester + S-adenosyl-L-homocysteine. Its pathway is cofactor biosynthesis; biotin biosynthesis. Converts the free carboxyl group of a malonyl-thioester to its methyl ester by transfer of a methyl group from S-adenosyl-L-methionine (SAM). It allows to synthesize pimeloyl-ACP via the fatty acid synthetic pathway. The protein is Malonyl-[acyl-carrier protein] O-methyltransferase of Herminiimonas arsenicoxydans.